The primary structure comprises 414 residues: Serine hydroxymethyltransferase (414 aa).

(6S)-5,6,7,8-tetrahydrofolate is bound by residues leucine 121 and 125–127 (GHL). At lysine 229 the chain carries N6-(pyridoxal phosphate)lysine.

Belongs to the SHMT family. Homodimer. It depends on pyridoxal 5'-phosphate as a cofactor.

It is found in the cytoplasm. The catalysed reaction is (6R)-5,10-methylene-5,6,7,8-tetrahydrofolate + glycine + H2O = (6S)-5,6,7,8-tetrahydrofolate + L-serine. It participates in one-carbon metabolism; tetrahydrofolate interconversion. Its pathway is amino-acid biosynthesis; glycine biosynthesis; glycine from L-serine: step 1/1. Functionally, catalyzes the reversible interconversion of serine and glycine with tetrahydrofolate (THF) serving as the one-carbon carrier. This reaction serves as the major source of one-carbon groups required for the biosynthesis of purines, thymidylate, methionine, and other important biomolecules. Also exhibits THF-independent aldolase activity toward beta-hydroxyamino acids, producing glycine and aldehydes, via a retro-aldol mechanism. The protein is Serine hydroxymethyltransferase of Acidovorax ebreus (strain TPSY) (Diaphorobacter sp. (strain TPSY)).